The primary structure comprises 459 residues: Pentatricopeptide repeat-containing protein At1g07740, mitochondrial (459 aa).

The transit peptide at 1–20 (MRRRLSSVLINNQCIASQRH) directs the protein to the mitochondrion. A disordered region spans residues 19 to 41 (RHYHTSRPEKPTKKASSHEPTHK). The span at 24–41 (SRPEKPTKKASSHEPTHK) shows a compositional bias: basic and acidic residues. PPR repeat units follow at residues 80–114 (DYPS…NVRC), 115–149 (RESL…DCVR), 150–184 (TIQS…RLRP), 185–219 (NSVS…EVQP), 220–254 (SVVT…RIRP), 255–289 (NAVT…GCKP), 290–324 (GLVN…RIKP), 325–359 (DVVI…GCKP), 360–394 (NAAT…RHCP), and 395–429 (TPAT…NLSF).

Belongs to the PPR family. P subfamily.

It is found in the mitochondrion. This chain is Pentatricopeptide repeat-containing protein At1g07740, mitochondrial, found in Arabidopsis thaliana (Mouse-ear cress).